We begin with the raw amino-acid sequence, 352 residues long: Uroporphyrinogen decarboxylase (352 aa).

Substrate is bound by residues 26–30 (RQAGR), Phe45, Asp76, Tyr153, Ser208, and His323.

Belongs to the uroporphyrinogen decarboxylase family. Homodimer.

It localises to the cytoplasm. The enzyme catalyses uroporphyrinogen III + 4 H(+) = coproporphyrinogen III + 4 CO2. The protein operates within porphyrin-containing compound metabolism; protoporphyrin-IX biosynthesis; coproporphyrinogen-III from 5-aminolevulinate: step 4/4. Its function is as follows. Catalyzes the decarboxylation of four acetate groups of uroporphyrinogen-III to yield coproporphyrinogen-III. This chain is Uroporphyrinogen decarboxylase, found in Parasynechococcus marenigrum (strain WH8102).